The chain runs to 898 residues: Coiled-coil domain-containing protein 186 (898 aa).

Disordered stretches follow at residues 1–43, 68–95, and 702–749; these read MSET…NESK, NYIP…QIAN, and RRKL…SSVA. Ser-2 carries the post-translational modification N-acetylserine. The span at 82 to 95 shows a compositional bias: polar residues; the sequence is KTDTGSENSEQIAN. Residues 201–712 adopt a coiled-coil conformation; that stretch reads KYLQQEHIIK…RKLDQVESGS (512 aa). Residues 703-717 show a composition bias toward basic and acidic residues; the sequence is RKLDQVESGSYDKEV. Residues 718–734 are compositionally biased toward low complexity; the sequence is SSMGSRSSSSGSLNARS. At Ser-740 the chain carries Phosphoserine. Coiled coils occupy residues 759-803 and 855-894; these read AMLI…IQSY and KLQA…LEQR.

The sequence is that of Coiled-coil domain-containing protein 186 (CCDC186) from Homo sapiens (Human).